Here is a 274-residue protein sequence, read N- to C-terminus: Enoyl-CoA isomerase/hydratase fer4 (274 aa).

Substrate contacts are provided by residues 77-81 and Gly124; that span reads AGADL. Residues 79-109 are a coiled coil; the sequence is ADLKERREMSEAEVIEFLQDLRHMLEQVEKL.

This sequence belongs to the enoyl-CoA hydratase/isomerase family.

It carries out the reaction a (3S)-3-hydroxyacyl-CoA = a (2E)-enoyl-CoA + H2O. The enzyme catalyses a 4-saturated-(3S)-3-hydroxyacyl-CoA = a (3E)-enoyl-CoA + H2O. It functions in the pathway siderophore biosynthesis. In terms of biological role, enoyl-CoA isomerase/hydratase; part of the gene cluster that mediates the biosynthesis of siderophore ferrichrome A which is contributing to organismal virulence. The first step of ferrichrome A biosynthesis is performed by the HMG-CoA synthase hcs1 which catalyzes the generation of HMG-CoA and CoA using acetoacetyl-CoA and acetyl-CoA as substrates. The enoyl-CoA isomerase/hydratase fer4 then catalyzes the conversion of hcs1-produced HMG-CoA to methylglutaconyl-CoA. The acyltransferase fer5 then fuses the fer4-generated methylglutaconyl-CoA with sid1-generated hydroxyornithine to yield methylglutaconyl hydroxyornithine. Methylglutaconyl hydroxyornithine is then available for use by the NRPS fer3 to generate ferrichrome A. This is Enoyl-CoA isomerase/hydratase fer4 from Mycosarcoma maydis (Corn smut fungus).